The sequence spans 633 residues: Phosphomethylpyrimidine synthase (633 aa).

Polar residues predominate over residues 1–13 (MNIRSNPDTTLPA). Residues 1–20 (MNIRSNPDTTLPAVTTGPLP) are disordered. Residues asparagine 221, methionine 250, tyrosine 279, histidine 315, 335 to 337 (SRG), 376 to 379 (DGLR), and glutamate 415 each bind substrate. Position 419 (histidine 419) interacts with Zn(2+). Tyrosine 442 is a binding site for substrate. Position 483 (histidine 483) interacts with Zn(2+). Residues cysteine 563, cysteine 566, and cysteine 571 each contribute to the [4Fe-4S] cluster site.

This sequence belongs to the ThiC family. In terms of assembly, homodimer. The cofactor is [4Fe-4S] cluster.

It carries out the reaction 5-amino-1-(5-phospho-beta-D-ribosyl)imidazole + S-adenosyl-L-methionine = 4-amino-2-methyl-5-(phosphooxymethyl)pyrimidine + CO + 5'-deoxyadenosine + formate + L-methionine + 3 H(+). The protein operates within cofactor biosynthesis; thiamine diphosphate biosynthesis. Catalyzes the synthesis of the hydroxymethylpyrimidine phosphate (HMP-P) moiety of thiamine from aminoimidazole ribotide (AIR) in a radical S-adenosyl-L-methionine (SAM)-dependent reaction. This chain is Phosphomethylpyrimidine synthase, found in Bradyrhizobium sp. (strain ORS 278).